The following is a 694-amino-acid chain: DNA primase (694 aa).

The CHC2-type zinc finger occupies 41-65 (CPFHDDKSPSFTVSPAKQFYYCFSC). A Toprim domain is found at 265 to 348 (DQAVVVEGYF…QGQVQLRVLN (84 aa)). Residues Glu271, Asp317, and Asp319 each coordinate Mg(2+).

Belongs to the DnaG primase family. In terms of assembly, monomer. Interacts with DnaB. The cofactor is Zn(2+). Mg(2+) serves as cofactor.

The enzyme catalyses ssDNA + n NTP = ssDNA/pppN(pN)n-1 hybrid + (n-1) diphosphate.. Functionally, RNA polymerase that catalyzes the synthesis of short RNA molecules used as primers for DNA polymerase during DNA replication. This is DNA primase from Synechococcus elongatus (strain ATCC 33912 / PCC 7942 / FACHB-805) (Anacystis nidulans R2).